The sequence spans 151 residues: uncharacterized protein (151 aa).

This is an uncharacterized protein from Archaeoglobus fulgidus (strain ATCC 49558 / DSM 4304 / JCM 9628 / NBRC 100126 / VC-16).